Consider the following 404-residue polypeptide: RING-H2 finger protein ATL11 (404 aa).

Positions 1 to 36 are cleaved as a signal peptide; sequence MNPKGRTNLNRSIIGGHDHGSILQLLLFLLLLSSHG. The chain crosses the membrane as a helical span at residues 64–84; the sequence is AILMIVLVSVFFFLGFFSVYI. The segment at 144–186 adopts an RING-type; atypical zinc-finger fold; that stretch reads CSVCLNEFEDDETLRLIPKCCHVFHPGCIDAWLRSHTTCPLCR. 2 disordered regions span residues 339 to 361 and 385 to 404; these read PYRT…VRAS and VGEN…SNTV.

Belongs to the RING-type zinc finger family. ATL subfamily.

It localises to the membrane. It catalyses the reaction S-ubiquitinyl-[E2 ubiquitin-conjugating enzyme]-L-cysteine + [acceptor protein]-L-lysine = [E2 ubiquitin-conjugating enzyme]-L-cysteine + N(6)-ubiquitinyl-[acceptor protein]-L-lysine.. Its pathway is protein modification; protein ubiquitination. This Arabidopsis thaliana (Mouse-ear cress) protein is RING-H2 finger protein ATL11 (ATL11).